We begin with the raw amino-acid sequence, 316 residues long: tRNA dimethylallyltransferase (316 aa).

G17 to T24 is an ATP binding site. Position 19–24 (T19–T24) interacts with substrate. Interaction with substrate tRNA regions lie at residues D42–L45, Q166–R170, R247–R252, and K280–R287.

It belongs to the IPP transferase family. Monomer. It depends on Mg(2+) as a cofactor.

It catalyses the reaction adenosine(37) in tRNA + dimethylallyl diphosphate = N(6)-dimethylallyladenosine(37) in tRNA + diphosphate. Its function is as follows. Catalyzes the transfer of a dimethylallyl group onto the adenine at position 37 in tRNAs that read codons beginning with uridine, leading to the formation of N6-(dimethylallyl)adenosine (i(6)A). This Escherichia coli O81 (strain ED1a) protein is tRNA dimethylallyltransferase.